An 87-amino-acid chain; its full sequence is Small ribosomal subunit protein bS20 (87 aa).

A disordered region spans residues 67 to 87 (HKNNGSRKASRLDAYVQSKQQ).

Belongs to the bacterial ribosomal protein bS20 family.

In terms of biological role, binds directly to 16S ribosomal RNA. The polypeptide is Small ribosomal subunit protein bS20 (Metamycoplasma arthritidis (strain 158L3-1) (Mycoplasma arthritidis)).